The chain runs to 258 residues: Myogenic factor 5 (258 aa).

The segment at 21–50 (LSSPEGEFPEDFEPRELPPFGAPAPTEPAC) is disordered. The 52-residue stretch at 85–136 (DRRKAATMRERRRLKKVNQAFETLKRCTTANPNQRLPKVEILRNAIRYIESL) folds into the bHLH domain. Positions 220 to 258 (AEEPGLPLRHAGSLSPGASIDSGPGTPGSPPPRRTYQAL) are disordered.

As to quaternary structure, efficient DNA binding requires dimerization with another bHLH protein.

It is found in the nucleus. Functionally, acts as a transcriptional activator that promotes transcription of muscle-specific target genes and plays a role in muscle differentiation. Induces fibroblasts to differentiate into myoblasts. Probable sequence specific DNA-binding protein. In Gallus gallus (Chicken), this protein is Myogenic factor 5 (MYF5).